A 262-amino-acid chain; its full sequence is Hydroxyethylthiazole kinase (262 aa).

Methionine 40 contributes to the substrate binding site. 2 residues coordinate ATP: lysine 116 and threonine 162. Substrate is bound at residue glycine 189.

The protein belongs to the Thz kinase family. It depends on Mg(2+) as a cofactor.

The catalysed reaction is 5-(2-hydroxyethyl)-4-methylthiazole + ATP = 4-methyl-5-(2-phosphooxyethyl)-thiazole + ADP + H(+). It participates in cofactor biosynthesis; thiamine diphosphate biosynthesis; 4-methyl-5-(2-phosphoethyl)-thiazole from 5-(2-hydroxyethyl)-4-methylthiazole: step 1/1. In terms of biological role, catalyzes the phosphorylation of the hydroxyl group of 4-methyl-5-beta-hydroxyethylthiazole (THZ). The chain is Hydroxyethylthiazole kinase from Clostridioides difficile (strain 630) (Peptoclostridium difficile).